A 420-amino-acid chain; its full sequence is 3-isopropylmalate dehydratase large subunit (420 aa).

Cys-300, Cys-361, and Cys-364 together coordinate [4Fe-4S] cluster.

It belongs to the aconitase/IPM isomerase family. LeuC type 2 subfamily. In terms of assembly, heterodimer of LeuC and LeuD. It depends on [4Fe-4S] cluster as a cofactor.

The catalysed reaction is (2R,3S)-3-isopropylmalate = (2S)-2-isopropylmalate. It participates in amino-acid biosynthesis; L-leucine biosynthesis; L-leucine from 3-methyl-2-oxobutanoate: step 2/4. Catalyzes the isomerization between 2-isopropylmalate and 3-isopropylmalate, via the formation of 2-isopropylmaleate. The chain is 3-isopropylmalate dehydratase large subunit from Endomicrobium trichonymphae.